The chain runs to 133 residues: Bacteriohemerythrin (133 aa).

Fe cation-binding residues include H19, H56, E60, H75, H79, H115, and D120.

The protein belongs to the hemerythrin family. In terms of assembly, monomer.

Its function is as follows. Oxygen-binding protein. May be involved in a storage mechanism or for delivery to oxygen-requiring enzymes. The oxygen-binding site contains two iron atoms. The chain is Bacteriohemerythrin from Campylobacter jejuni subsp. jejuni serotype O:6 (strain 81116 / NCTC 11828).